The sequence spans 380 residues: 1-deoxy-D-xylulose 5-phosphate reductoisomerase (380 aa).

Residues T10, G11, S12, I13, G36, R37, N38, and N120 each contribute to the NADPH site. A 1-deoxy-D-xylulose 5-phosphate-binding site is contributed by K121. Position 122 (E122) interacts with NADPH. D146 contacts Mn(2+). 1-deoxy-D-xylulose 5-phosphate contacts are provided by S147, E148, S172, and H195. Residue E148 coordinates Mn(2+). G201 lines the NADPH pocket. Residues S208, N213, K214, and E217 each contribute to the 1-deoxy-D-xylulose 5-phosphate site. Residue E217 coordinates Mn(2+).

The protein belongs to the DXR family. The cofactor is Mg(2+). It depends on Mn(2+) as a cofactor.

It catalyses the reaction 2-C-methyl-D-erythritol 4-phosphate + NADP(+) = 1-deoxy-D-xylulose 5-phosphate + NADPH + H(+). The protein operates within isoprenoid biosynthesis; isopentenyl diphosphate biosynthesis via DXP pathway; isopentenyl diphosphate from 1-deoxy-D-xylulose 5-phosphate: step 1/6. Functionally, catalyzes the NADPH-dependent rearrangement and reduction of 1-deoxy-D-xylulose-5-phosphate (DXP) to 2-C-methyl-D-erythritol 4-phosphate (MEP). This is 1-deoxy-D-xylulose 5-phosphate reductoisomerase from Listeria monocytogenes serotype 4b (strain F2365).